The primary structure comprises 144 residues: Large ribosomal subunit protein uL15 (144 aa).

A disordered region spans residues 1–53 (MRLNTLSPAEGAKHAPKRVGRGIGSGLGKTGGRGHKGQKSRSGGGVRRGFEGG). The span at 21–31 (RGIGSGLGKTG) shows a compositional bias: gly residues.

It belongs to the universal ribosomal protein uL15 family. In terms of assembly, part of the 50S ribosomal subunit.

Functionally, binds to the 23S rRNA. The polypeptide is Large ribosomal subunit protein uL15 (Proteus mirabilis (strain HI4320)).